A 366-amino-acid chain; its full sequence is Chalcone synthase B (366 aa).

The active site involves Cys-172.

It belongs to the thiolase-like superfamily. Chalcone/stilbene synthases family.

It catalyses the reaction (E)-4-coumaroyl-CoA + 3 malonyl-CoA + 3 H(+) = 2',4,4',6'-tetrahydroxychalcone + 3 CO2 + 4 CoA. It functions in the pathway secondary metabolite biosynthesis; flavonoid biosynthesis. Its function is as follows. The primary product of this enzyme is 4,2',4',6'-tetrahydroxychalcone (also termed naringenin-chalcone or chalcone) which can under specific conditions spontaneously isomerize into naringenin. The protein is Chalcone synthase B (CHSB) of Ipomoea triloba (Trilobed morning glory).